The sequence spans 177 residues: Embryogenesis-like protein (177 aa).

The stretch at 98–118 forms a coiled coil; that stretch reads VDEINLKFAEAREEIEMAMDA.

As to quaternary structure, interacts with HAG1/GCN5. As to expression, expressed in flowers, leaves, stems and siliques.

It is found in the nucleus. Functionally, activates gene expression by recruiting HAG1/GCN5 and triggering subsequent histone H3 acetylation of target genes promoters. The polypeptide is Embryogenesis-like protein (Arabidopsis thaliana (Mouse-ear cress)).